We begin with the raw amino-acid sequence, 129 residues long: Glycine cleavage system H protein (129 aa).

Residues 24 to 106 (EAVVGITEHA…YGAGWLFRIK (83 aa)) form the Lipoyl-binding domain. Lys-65 is subject to N6-lipoyllysine.

Belongs to the GcvH family. The glycine cleavage system is composed of four proteins: P, T, L and H. The cofactor is (R)-lipoate.

Its function is as follows. The glycine cleavage system catalyzes the degradation of glycine. The H protein shuttles the methylamine group of glycine from the P protein to the T protein. The polypeptide is Glycine cleavage system H protein (Aeromonas hydrophila subsp. hydrophila (strain ATCC 7966 / DSM 30187 / BCRC 13018 / CCUG 14551 / JCM 1027 / KCTC 2358 / NCIMB 9240 / NCTC 8049)).